A 346-amino-acid polypeptide reads, in one-letter code: MQPIRYRTDLTPYNTFGLRAQARAFIALEHADGLRDIVRLPEFDRDTVLWLGGGSNILLMQDYAGLVVHMENKGIREIARSDGMVLIEAQAGEIWHDFVLHTVALGLSGLENLSLIPGTVGASPVQNIGAYGVEAKDVIHSVRCFDLDTETFVTLSNADCRFAYRESLFKQEGKGRYVIVSVVFALKTHFVPNLGYGDLAAKVAELSAGREATAKDVSDAVCAIRNSKLPNPNVLGNVGSFFKNPVIGAEKAAALLEQHPDMPHYPQPDGSVKLAAGWLIDQCRLKGFQIGGAAVHGRQALVLVNKNNASANDVRQLAQHIKFTVFARFQVELHAEPNWLPASFSL.

Residues leucine 18–histidine 189 enclose the FAD-binding PCMH-type domain. Residue arginine 165 is part of the active site. Serine 240 serves as the catalytic Proton donor. The active site involves glutamate 336.

It belongs to the MurB family. FAD is required as a cofactor.

The protein resides in the cytoplasm. The enzyme catalyses UDP-N-acetyl-alpha-D-muramate + NADP(+) = UDP-N-acetyl-3-O-(1-carboxyvinyl)-alpha-D-glucosamine + NADPH + H(+). The protein operates within cell wall biogenesis; peptidoglycan biosynthesis. Cell wall formation. The chain is UDP-N-acetylenolpyruvoylglucosamine reductase from Neisseria meningitidis serogroup C (strain 053442).